Consider the following 113-residue polypeptide: Large ribosomal subunit protein bL17 (113 aa).

Belongs to the bacterial ribosomal protein bL17 family. Part of the 50S ribosomal subunit. Contacts protein L32.

This is Large ribosomal subunit protein bL17 from Clostridium perfringens (strain ATCC 13124 / DSM 756 / JCM 1290 / NCIMB 6125 / NCTC 8237 / Type A).